Consider the following 65-residue polypeptide: Toxin Cbi1 (65 aa).

The LCN-type CS-alpha/beta domain maps to 1–64 (KDGYPMDNKG…VWDRATNKCR (64 aa)). Disulfide bonds link C11–C63, C15–C37, C22–C44, and C26–C46.

This sequence belongs to the long (4 C-C) scorpion toxin superfamily. Sodium channel inhibitor family. Beta subfamily. As to expression, expressed by the venom gland.

The protein localises to the secreted. Its function is as follows. Beta toxins bind voltage-independently at site-4 of sodium channels (Nav) and shift the voltage of activation toward more negative potentials thereby affecting sodium channel activation and promoting spontaneous and repetitive firing. The sequence is that of Toxin Cbi1 from Centruroides bicolor (Scorpion).